The chain runs to 208 residues: V-type ATP synthase subunit E (208 aa).

It belongs to the V-ATPase E subunit family.

Its function is as follows. Produces ATP from ADP in the presence of a proton gradient across the membrane. This Chlamydia trachomatis serovar A (strain ATCC VR-571B / DSM 19440 / HAR-13) protein is V-type ATP synthase subunit E.